Here is a 290-residue protein sequence, read N- to C-terminus: Shikimate dehydrogenase (NADP(+)) (290 aa).

Residues 22–24 (SLS) and T68 contribute to the shikimate site. K72 acts as the Proton acceptor in catalysis. Residues N93 and D108 each coordinate shikimate. Residues 133–137 (GSGGS) and I228 contribute to the NADP(+) site. Y230 is a binding site for shikimate. An NADP(+)-binding site is contributed by G251.

The protein belongs to the shikimate dehydrogenase family. Homodimer.

The catalysed reaction is shikimate + NADP(+) = 3-dehydroshikimate + NADPH + H(+). Its pathway is metabolic intermediate biosynthesis; chorismate biosynthesis; chorismate from D-erythrose 4-phosphate and phosphoenolpyruvate: step 4/7. Its function is as follows. Involved in the biosynthesis of the chorismate, which leads to the biosynthesis of aromatic amino acids. Catalyzes the reversible NADPH linked reduction of 3-dehydroshikimate (DHSA) to yield shikimate (SA). The polypeptide is Shikimate dehydrogenase (NADP(+)) (Leptospira borgpetersenii serovar Hardjo-bovis (strain JB197)).